Reading from the N-terminus, the 535-residue chain is Interferon lambda receptor 1 (535 aa).

Positions 1–20 (MWRADRWAPLLLFLLQSALG) are cleaved as a signal peptide. Residues 21 to 227 (RPRLAPPRNV…FLEAPGDKRA (207 aa)) lie on the Extracellular side of the membrane. In terms of domain architecture, Fibronectin type-III spans 26–121 (PPRNVTLFSQ…ESRYLEYLFD (96 aa)). Residues asparagine 29, asparagine 36, and asparagine 52 are each glycosylated (N-linked (GlcNAc...) asparagine). Disulfide bonds link cysteine 73–cysteine 81, cysteine 85–cysteine 149, and cysteine 194–cysteine 216. The N-linked (GlcNAc...) asparagine glycan is linked to asparagine 141. The helical transmembrane segment at 228–248 (VLAMPSLLLLLIAAVAAGVAW) threads the bilayer. Residues 249-535 (KIMKGNPWFQ…GRMLGDYLVR (287 aa)) are Cytoplasmic-facing. Disordered regions lie at residues 301–419 (NRPA…APCG) and 478–520 (VNNP…SSVQ). Over residues 321 to 336 (STEDEDEDTDYDDDGD) the composition is skewed to acidic residues. The segment covering 350–360 (EKPRVMEHSET) has biased composition (basic and acidic residues). Low complexity predominate over residues 376–396 (GSDGSSAWDSSDRSWSSTGDS). Positions 397-414 (SYKDEVGSSSCLDRKEPD) are enriched in basic and acidic residues. Positions 482-503 (EGEEEQEDEEEEEEEEEEEDWE) are enriched in acidic residues.

It belongs to the type II cytokine receptor family. In terms of assembly, heterodimer with IL10RB. In terms of processing, ubiquitinated by FBXO45-containing E3 ligase leading to proteasomal degradation.

It is found in the membrane. In terms of biological role, the IFNLR1/IL10RB dimer is a receptor for the cytokine ligands IFNL2 and IFNL3 and mediates their antiviral activity. The ligand/receptor complex stimulate the activation of the JAK/STAT signaling pathway leading to the expression of IFN-stimulated genes (ISG), which contribute to the antiviral state. Determines the cell type specificity of the lambda interferon action. Shows a more restricted pattern of expression in the epithelial tissues thereby limiting responses to lambda interferons primarily to epithelial cells of the respiratory, gastrointestinal, and reproductive tracts. Seems not to be essential for early virus-activated host defense in vaginal infection, but plays an important role in Toll-like receptor (TLR)-induced antiviral defense. Plays a significant role in the antiviral immune defense in the intestinal epithelium. The chain is Interferon lambda receptor 1 (Ifnlr1) from Mus musculus (Mouse).